A 182-amino-acid polypeptide reads, in one-letter code: Ribosome-recycling factor (182 aa).

It belongs to the RRF family.

It is found in the cytoplasm. Its function is as follows. Responsible for the release of ribosomes from messenger RNA at the termination of protein biosynthesis. May increase the efficiency of translation by recycling ribosomes from one round of translation to another. The polypeptide is Ribosome-recycling factor (Synechococcus sp. (strain CC9605)).